Consider the following 127-residue polypeptide: Protein ApaG (127 aa).

Residues 3-127 (DDPRYRVEVE…FVLSVPRTLH (125 aa)) enclose the ApaG domain.

The polypeptide is Protein ApaG (Xanthomonas euvesicatoria pv. vesicatoria (strain 85-10) (Xanthomonas campestris pv. vesicatoria)).